Consider the following 477-residue polypeptide: Endoglucanase A (477 aa).

The first 32 residues, M1–A32, serve as a signal peptide directing secretion. Catalysis depends on E95, which acts as the Proton donor. The active-site Nucleophile is D152. The Dockerin domain maps to P411 to Y477.

Belongs to the glycosyl hydrolase 8 (cellulase D) family.

The catalysed reaction is Endohydrolysis of (1-&gt;4)-beta-D-glucosidic linkages in cellulose, lichenin and cereal beta-D-glucans.. This enzyme catalyzes the endohydrolysis of 1,4-beta-glucosidic linkages in cellulose, lichenin and cereal beta-D-glucans. The polypeptide is Endoglucanase A (celA) (Acetivibrio thermocellus (strain ATCC 27405 / DSM 1237 / JCM 9322 / NBRC 103400 / NCIMB 10682 / NRRL B-4536 / VPI 7372) (Clostridium thermocellum)).